A 476-amino-acid polypeptide reads, in one-letter code: Inosine-5'-monophosphate dehydrogenase (476 aa).

2 consecutive CBS domains span residues 92–150 (MIEN…IADV) and 151–207 (MTKD…PNAS). NAD(+) is bound by residues Asp244 and 294–296 (GVG). K(+)-binding residues include Gly296 and Gly298. IMP is bound at residue Ser299. Cys301 contacts K(+). Cys301 (thioimidate intermediate) is an active-site residue. Residues 334 to 336 (DGG), 357 to 358 (GS), 381 to 385 (YRGMA), and Glu413 contribute to the IMP site. Residues Glu467 and Ser468 each contribute to the K(+) site.

This sequence belongs to the IMPDH/GMPR family. Homotetramer. K(+) serves as cofactor.

The enzyme catalyses IMP + NAD(+) + H2O = XMP + NADH + H(+). Its pathway is purine metabolism; XMP biosynthesis via de novo pathway; XMP from IMP: step 1/1. Its activity is regulated as follows. Mycophenolic acid (MPA) is a non-competitive inhibitor that prevents formation of the closed enzyme conformation by binding to the same site as the amobile flap. In contrast, mizoribine monophosphate (MZP) is a competitive inhibitor that induces the closed conformation. MPA is a potent inhibitor of mammalian IMPDHs but a poor inhibitor of the bacterial enzymes. MZP is a more potent inhibitor of bacterial IMPDH. Catalyzes the conversion of inosine 5'-phosphate (IMP) to xanthosine 5'-phosphate (XMP), the first committed and rate-limiting step in the de novo synthesis of guanine nucleotides, and therefore plays an important role in the regulation of cell growth. This is Inosine-5'-monophosphate dehydrogenase from Nitrosopumilus maritimus (strain SCM1).